Reading from the N-terminus, the 353-residue chain is Casein kinase II subunit alpha (353 aa).

One can recognise a Protein kinase domain in the interval 39-324 (YQLVRKLGRG…AREAMDHPYF (286 aa)). ATP contacts are provided by residues 45–53 (LGRGKYSEV) and K68. Catalysis depends on D156, which acts as the Proton acceptor. A disordered region spans residues 334–353 (MVSSNSPTPNALQGPISTTE).

Belongs to the protein kinase superfamily. Ser/Thr protein kinase family. CK2 subfamily. Tetramer of two alpha and two beta chains.

The enzyme catalyses L-seryl-[protein] + ATP = O-phospho-L-seryl-[protein] + ADP + H(+). It catalyses the reaction L-threonyl-[protein] + ATP = O-phospho-L-threonyl-[protein] + ADP + H(+). Functionally, casein kinases are operationally defined by their preferential utilization of acidic proteins such as caseins as substrates. The alpha chain contains the catalytic site. May participate in Wnt signaling. In Spodoptera frugiperda (Fall armyworm), this protein is Casein kinase II subunit alpha.